We begin with the raw amino-acid sequence, 445 residues long: GTPase Der (445 aa).

EngA-type G domains follow at residues Phe-2 to Glu-166 and Ile-182 to Trp-355. GTP contacts are provided by residues Gly-8–Ser-15, Asp-55–Tyr-59, Asn-118–Asp-121, Gly-188–Ser-195, Asp-235–Met-239, and Asn-300–Asp-303. A KH-like domain is found at Lys-356–Glu-440.

The protein belongs to the TRAFAC class TrmE-Era-EngA-EngB-Septin-like GTPase superfamily. EngA (Der) GTPase family. Associates with the 50S ribosomal subunit.

Its function is as follows. GTPase that plays an essential role in the late steps of ribosome biogenesis. This is GTPase Der from Sulfurihydrogenibium sp. (strain YO3AOP1).